A 170-amino-acid polypeptide reads, in one-letter code: Probable Brix domain-containing ribosomal biogenesis protein (170 aa).

Residues 6–170 enclose the Brix domain; the sequence is TRIVITSSRD…IKFLKMILEA (165 aa).

Probably involved in the biogenesis of the ribosome. The chain is Probable Brix domain-containing ribosomal biogenesis protein from Saccharolobus solfataricus (strain ATCC 35092 / DSM 1617 / JCM 11322 / P2) (Sulfolobus solfataricus).